Reading from the N-terminus, the 279-residue chain is Fatty acid metabolism regulator protein (279 aa).

In terms of domain architecture, HTH gntR-type spans 6–74; the sequence is KSPAGFAEKY…HGKPTKVNQF (69 aa). A DNA-binding region (H-T-H motif) is located at residues 34–53; the sequence is ERELSELIGVTRTTLREVLQ.

As to quaternary structure, homodimer.

It localises to the cytoplasm. Multifunctional regulator of fatty acid metabolism. In Vibrio cholerae serotype O1 (strain ATCC 39541 / Classical Ogawa 395 / O395), this protein is Fatty acid metabolism regulator protein.